The chain runs to 332 residues: Transcription regulatory protein SNF6 (332 aa).

The Nuclear localization signal signature appears at 2-8; it reads GVIKKKR. Position 165 is a phosphothreonine (T165). A disordered region spans residues 278-299; that stretch reads VTTVASQSPHATATEKEPVPAV.

As to quaternary structure, component of the SWI/SNF global transcription activator complex. The 1.14 MDa SWI/SNF complex is composed of 11 different subunits: one copy each of SWI1, SNF2/SWI2, SNF5, SNF12/SWP73, ARP7/SWP61, ARP9/SWP59; two copies each of SWI3, SNF6, SNF11, SWP82; and three copies of TAF14/SWP29.

It is found in the nucleus. In terms of biological role, involved in transcriptional activation. Component of the SWI/SNF complex, an ATP-dependent chromatin remodeling complex, which is required for the positive and negative regulation of gene expression of a large number of genes. It changes chromatin structure by altering DNA-histone contacts within a nucleosome, leading eventually to a change in nucleosome position, thus facilitating or repressing binding of gene-specific transcription factors. The sequence is that of Transcription regulatory protein SNF6 (SNF6) from Saccharomyces cerevisiae (strain ATCC 204508 / S288c) (Baker's yeast).